We begin with the raw amino-acid sequence, 687 residues long: Protein SDA1 homolog (687 aa).

Residues Ser-232, Ser-234, and Ser-236 each carry the phosphoserine modification. The stretch at 254–315 forms a coiled coil; the sequence is KKGSKNKKKL…SCKERFEVKM (62 aa). The disordered stretch occupies residues 484 to 509; that stretch reads LEKGENTEDDEDGWESASLSEEEEED. Over residues 490-509 the composition is skewed to acidic residues; it reads TEDDEDGWESASLSEEEEED. Thr-552 is subject to Phosphothreonine. Ser-585, Ser-589, and Ser-595 each carry phosphoserine. Residues 604 to 651 form a disordered region; that stretch reads KKPKSDKETRLATAMAGRTDRKEFVRKKTKINPFSSSTNKEKKKQKNF.

It belongs to the SDA1 family.

It localises to the nucleus. It is found in the nucleolus. Required for 60S pre-ribosomal subunits export to the cytoplasm. The polypeptide is Protein SDA1 homolog (Sdad1) (Mus musculus (Mouse)).